The chain runs to 51 residues: Large ribosomal subunit protein eL39 (51 aa).

It belongs to the eukaryotic ribosomal protein eL39 family.

The sequence is that of Large ribosomal subunit protein eL39 from Picrophilus torridus (strain ATCC 700027 / DSM 9790 / JCM 10055 / NBRC 100828 / KAW 2/3).